Consider the following 55-residue polypeptide: Large ribosomal subunit protein bL33 (55 aa).

The protein belongs to the bacterial ribosomal protein bL33 family.

This chain is Large ribosomal subunit protein bL33, found in Arthrobacter sp. (strain FB24).